The chain runs to 171 residues: ATP synthase subunit b (171 aa).

The chain crosses the membrane as a helical span at residues 14–34 (LGDMLFIGISFIVLMALISVV). Over residues 56–97 (SAQKSRQEASDLADQRRDALSHSRAEASEIVADAKKSGEKQR) the composition is skewed to basic and acidic residues. Residues 56–104 (SAQKSRQEASDLADQRRDALSHSRAEASEIVADAKKSGEKQRSSIVADA) form a disordered region.

It belongs to the ATPase B chain family. As to quaternary structure, F-type ATPases have 2 components, F(1) - the catalytic core - and F(0) - the membrane proton channel. F(1) has five subunits: alpha(3), beta(3), gamma(1), delta(1), epsilon(1). F(0) has three main subunits: a(1), b(2) and c(10-14). The alpha and beta chains form an alternating ring which encloses part of the gamma chain. F(1) is attached to F(0) by a central stalk formed by the gamma and epsilon chains, while a peripheral stalk is formed by the delta and b chains.

The protein localises to the cell membrane. Functionally, f(1)F(0) ATP synthase produces ATP from ADP in the presence of a proton or sodium gradient. F-type ATPases consist of two structural domains, F(1) containing the extramembraneous catalytic core and F(0) containing the membrane proton channel, linked together by a central stalk and a peripheral stalk. During catalysis, ATP synthesis in the catalytic domain of F(1) is coupled via a rotary mechanism of the central stalk subunits to proton translocation. In terms of biological role, component of the F(0) channel, it forms part of the peripheral stalk, linking F(1) to F(0). This Lactiplantibacillus plantarum (strain ATCC BAA-793 / NCIMB 8826 / WCFS1) (Lactobacillus plantarum) protein is ATP synthase subunit b.